The chain runs to 370 residues: Actin-related protein 2/3 complex subunit 1A (370 aa).

WD repeat units lie at residues Phe6–Ala45, Glu50–Thr89, Pro140–Lys179, Gly202–Thr241, Thr244–Ser284, and Leu322–Gln365.

The protein belongs to the WD repeat ARPC1 family. Probable component of the Arp2/3 complex in which it may replace ARPC1B.

Its subcellular location is the cytoplasm. The protein localises to the cytoskeleton. It localises to the nucleus. Its function is as follows. Probably functions as a component of the Arp2/3 complex which is involved in regulation of actin polymerization and together with an activating nucleation-promoting factor (NPF) mediates the formation of branched actin networks. In addition to its role in the cytoplasmic cytoskeleton, the Arp2/3 complex also promotes actin polymerization in the nucleus, thereby regulating gene transcription and repair of damaged DNA. This Bos taurus (Bovine) protein is Actin-related protein 2/3 complex subunit 1A (ARPC1A).